The following is an 86-amino-acid chain: Neurotoxin 3FTx-8a (86 aa).

An N-terminal signal peptide occupies residues Met1–Thr21. 5 disulfides stabilise this stretch: Cys24–Cys45, Cys27–Cys32, Cys38–Cys63, Cys67–Cys78, and Cys79–Cys84.

In terms of tissue distribution, expressed by the venom gland.

Its subcellular location is the secreted. Its function is as follows. Binds with low affinity to muscular (alpha-1-beta-1-delta-epsilon/CHRNA1-CHRNB1-CHRND-CHRNE) and very low affinity to neuronal (alpha-7/CHRNA7) nicotinic acetylcholine receptor (nAChR). This chain is Neurotoxin 3FTx-8a, found in Bungarus fasciatus (Banded krait).